The following is a 196-amino-acid chain: Imidazoleglycerol-phosphate dehydratase (196 aa).

Belongs to the imidazoleglycerol-phosphate dehydratase family.

It localises to the cytoplasm. It catalyses the reaction D-erythro-1-(imidazol-4-yl)glycerol 3-phosphate = 3-(imidazol-4-yl)-2-oxopropyl phosphate + H2O. The protein operates within amino-acid biosynthesis; L-histidine biosynthesis; L-histidine from 5-phospho-alpha-D-ribose 1-diphosphate: step 6/9. The chain is Imidazoleglycerol-phosphate dehydratase from Clostridium botulinum (strain 657 / Type Ba4).